A 352-amino-acid polypeptide reads, in one-letter code: uncharacterized protein (352 aa).

The stretch at 285 to 352 forms a coiled coil; it reads FQHLRNARER…IKSEIRRLQR (68 aa).

This is an uncharacterized protein from Emericella nidulans (strain FGSC A4 / ATCC 38163 / CBS 112.46 / NRRL 194 / M139) (Aspergillus nidulans).